The chain runs to 438 residues: DEAD-box ATP-dependent RNA helicase CshB (438 aa).

The Q motif motif lies at 4-32; that stretch reads TKFELYELKPFIIDAVHRLGFYEPTDIQK. The region spanning 35 to 208 is the Helicase ATP-binding domain; that stretch reads IPAVLKKESV…KKYMENPKYA (174 aa). 48–55 lines the ATP pocket; that stretch reads SQTGTGKT. A DEAD box motif is present at residues 156 to 159; that stretch reads DEAD. One can recognise a Helicase C-terminal domain in the interval 235-385; it reads LLFDIMSHLN…EWKKGDDRQR (151 aa). Residues 380-438 form a disordered region; the sequence is GDDRQRRKKRKKTPNEADEIAHRLVKKPKKVKPGYKKKMSYEMEKIKKKQRRNQSKKRK. The segment covering 392–401 has biased composition (basic and acidic residues); sequence TPNEADEIAH. Composition is skewed to basic residues over residues 402 to 417 and 425 to 438; these read RLVK…YKKK and IKKK…KKRK.

This sequence belongs to the DEAD box helicase family. As to quaternary structure, interacts with CspB when cells are transcriptionally active. May interact with RNA helicases CshA and DbpA (DeaD), may be a component of a possible RNA degradosome complex composed of rny, rnja, rnjb, pnp, pfkA and eno (although rnjA and rnjB's presence is unclear). Specifically interacts with pnp and rny.

The protein localises to the cytoplasm. The protein resides in the nucleoid. The enzyme catalyses ATP + H2O = ADP + phosphate + H(+). In terms of biological role, DEAD-box RNA helicase that plays a role in 70S ribosome assembly. May work in conjunction with the cold shock proteins to ensure proper initiation of transcription at low and optimal temperatures. The protein is DEAD-box ATP-dependent RNA helicase CshB of Bacillus subtilis (strain 168).